A 348-amino-acid chain; its full sequence is Ferredoxin--NADP reductase 1 (348 aa).

FAD contacts are provided by Glu-36, Lys-44, Tyr-48, Ile-88, Pro-123, Asp-285, and Ser-326. Residues 329–348 (EKFKKKNEQLKQEKQAQLMN) form a disordered region.

The protein belongs to the ferredoxin--NADP reductase type 2 family. As to quaternary structure, homodimer. The cofactor is FAD.

The enzyme catalyses 2 reduced [2Fe-2S]-[ferredoxin] + NADP(+) + H(+) = 2 oxidized [2Fe-2S]-[ferredoxin] + NADPH. This chain is Ferredoxin--NADP reductase 1, found in Shouchella clausii (strain KSM-K16) (Alkalihalobacillus clausii).